The chain runs to 78 residues: Large ribosomal subunit protein bL28 (78 aa).

Belongs to the bacterial ribosomal protein bL28 family.

This chain is Large ribosomal subunit protein bL28, found in Dichelobacter nodosus (strain VCS1703A).